Consider the following 174-residue polypeptide: Gamma-crystallin S (174 aa).

Beta/gamma crystallin 'Greek key' domains are found at residues 2–40 (GRII…RVES) and 41–83 (GAWV…KMIH). Positions 84-89 (FVSGSE) are connecting peptide. Beta/gamma crystallin 'Greek key' domains are found at residues 90 to 130 (YKIQ…KVLD) and 131 to 173 (GIWI…KRLM).

It belongs to the beta/gamma-crystallin family.

In terms of biological role, crystallins are the dominant structural components of the vertebrate eye lens. The chain is Gamma-crystallin S (crygs) from Cyprinus carpio (Common carp).